A 181-amino-acid chain; its full sequence is Probable RNA 2'-phosphotransferase (181 aa).

The protein belongs to the KptA/TPT1 family.

In terms of biological role, removes the 2'-phosphate from RNA via an intermediate in which the phosphate is ADP-ribosylated by NAD followed by a presumed transesterification to release the RNA and generate ADP-ribose 1''-2''-cyclic phosphate (APPR&gt;P). May function as an ADP-ribosylase. This Nostoc punctiforme (strain ATCC 29133 / PCC 73102) protein is Probable RNA 2'-phosphotransferase.